The chain runs to 201 residues: Probable chemoreceptor glutamine deamidase CheD (201 aa).

It belongs to the CheD family.

It catalyses the reaction L-glutaminyl-[protein] + H2O = L-glutamyl-[protein] + NH4(+). Probably deamidates glutamine residues to glutamate on methyl-accepting chemotaxis receptors (MCPs), playing an important role in chemotaxis. In Chlorobium luteolum (strain DSM 273 / BCRC 81028 / 2530) (Pelodictyon luteolum), this protein is Probable chemoreceptor glutamine deamidase CheD.